A 757-amino-acid polypeptide reads, in one-letter code: LPS-assembly protein LptD (757 aa).

A signal peptide spans 1–20 (MLQRFITSLMLLPFPGSALA).

Belongs to the LptD family. Component of the lipopolysaccharide transport and assembly complex. Interacts with LptE and LptA.

It localises to the cell outer membrane. Functionally, together with LptE, is involved in the assembly of lipopolysaccharide (LPS) at the surface of the outer membrane. The chain is LPS-assembly protein LptD from Idiomarina loihiensis (strain ATCC BAA-735 / DSM 15497 / L2-TR).